The sequence spans 277 residues: General transcription factor IIF subunit 2 (277 aa).

Belongs to the TFIIF beta subunit family. As to quaternary structure, heterodimer of an alpha and a beta subunit.

It is found in the nucleus. Its function is as follows. TFIIF is a general transcription initiation factor that binds to RNA polymerase II and helps to recruit it to the initiation complex in collaboration with TFIIB. This is General transcription factor IIF subunit 2 (TfIIFbeta) from Drosophila melanogaster (Fruit fly).